The sequence spans 669 residues: NAD-dependent malic enzyme, mitochondrial (669 aa).

A compositionally biased stretch (polar residues) spans 33 to 43; sequence IQQSRLYSSNT. Residues 33-68 are disordered; the sequence is IQQSRLYSSNTRSHKATTTRENTFQKPYSDEEVTKT. R142 is a binding site for fumarate. Y187 acts as the Proton donor in catalysis. The Proton acceptor role is filled by K259. A divalent metal cation-binding residues include E330, D331, and D354. Residues A387 and A390 each contribute to the NAD(+) site. Residues N499 and N539 each coordinate (S)-malate.

Belongs to the malic enzymes family. Mg(2+) serves as cofactor. Requires Mn(2+) as cofactor.

It is found in the mitochondrion matrix. The enzyme catalyses (S)-malate + NAD(+) = pyruvate + CO2 + NADH. It catalyses the reaction oxaloacetate + H(+) = pyruvate + CO2. Functionally, NAD-dependent mitochondrial malic enzyme that catalyzes the oxidative decarboxylation of malate to pyruvate. The chain is NAD-dependent malic enzyme, mitochondrial (MAE1) from Saccharomyces cerevisiae (strain ATCC 204508 / S288c) (Baker's yeast).